The primary structure comprises 493 residues: Signal recognition particle subunit SRP54 3 (493 aa).

The G-domain stretch occupies residues 1–294 (MVLADVGGSI…NVEPFVARLL (294 aa)). Residues 107 to 114 (GLQGSGKT), 189 to 193 (DTSGR), and 247 to 250 (TKLD) contribute to the GTP site. The M-domain stretch occupies residues 295–493 (GRGDLPGLID…KMLAGMRGGA (199 aa)).

This sequence belongs to the GTP-binding SRP family. SRP54 subfamily. As to quaternary structure, component of a signal recognition particle (SRP) complex that consists of a 7SL RNA molecule of 300 nucleotides and six protein subunits: SRP72, SRP68, SRP54, SRP19, SRP14 and SRP9.

The protein localises to the cytoplasm. It is found in the endoplasmic reticulum. The catalysed reaction is GTP + H2O = GDP + phosphate + H(+). In terms of biological role, component of the signal recognition particle (SRP) complex, a ribonucleoprotein complex that mediates the cotranslational targeting of secretory and membrane proteins to the endoplasmic reticulum (ER). As part of the SRP complex, associates with the SRP receptor (SR) component SRPRA to target secretory proteins to the endoplasmic reticulum membrane. Binds to the signal sequence of presecretory proteins when they emerge from the ribosomes. Displays basal GTPase activity, and stimulates reciprocal GTPase activation of the SR subunit SRPRA. Forms a guanosine 5'-triphosphate (GTP)-dependent complex with the SR subunit SRPRA. SR compaction and GTPase mediated rearrangement of SR drive SRP-mediated cotranslational protein translocation into the ER. Requires the presence of SRP9/SRP14 and/or SRP19 to stably interact with RNA. The chain is Signal recognition particle subunit SRP54 3 (SRP54-3) from Hordeum vulgare (Barley).